Here is a 156-residue protein sequence, read N- to C-terminus: UPF0460 protein in nifX 3'region (156 aa).

This sequence belongs to the UPF0460 family.

This Rhodobacter capsulatus (Rhodopseudomonas capsulata) protein is UPF0460 protein in nifX 3'region.